The chain runs to 315 residues: Thymidylate synthase (315 aa).

DUMP-binding positions include Arg-29 and 156-157 (RR). Catalysis depends on Cys-176, which acts as the Nucleophile. DUMP is bound by residues 213 to 216 (RSCD), Asn-224, and 254 to 256 (HVY). Residue Asp-216 coordinates (6R)-5,10-methylene-5,6,7,8-tetrahydrofolate.

Belongs to the thymidylate synthase family. Homodimer.

It catalyses the reaction dUMP + (6R)-5,10-methylene-5,6,7,8-tetrahydrofolate = 7,8-dihydrofolate + dTMP. The protein operates within pyrimidine metabolism; dTTP biosynthesis. This is Thymidylate synthase (TMP1) from Candida albicans (strain SC5314 / ATCC MYA-2876) (Yeast).